The following is a 103-amino-acid chain: Pterin-4-alpha-carbinolamine dehydratase 2 (103 aa).

This sequence belongs to the pterin-4-alpha-carbinolamine dehydratase family. As to expression, highest level found in the kidney, liver, heart and ovarian follicles.

It carries out the reaction (4aS,6R)-4a-hydroxy-L-erythro-5,6,7,8-tetrahydrobiopterin = (6R)-L-erythro-6,7-dihydrobiopterin + H2O. Its function is as follows. Involved in tetrahydrobiopterin biosynthesis. Seems to both prevent the formation of 7-pterins and accelerate the formation of quinonoid-BH2. Regulates the dimerization of homeodomain protein HNF-1-alpha and enhances its transcriptional activity. This chain is Pterin-4-alpha-carbinolamine dehydratase 2 (PCBD2), found in Gallus gallus (Chicken).